Reading from the N-terminus, the 259-residue chain is Thiazole synthase (259 aa).

Catalysis depends on Lys95, which acts as the Schiff-base intermediate with DXP. 1-deoxy-D-xylulose 5-phosphate is bound by residues Gly156, 182–183 (AG), and 204–205 (NT).

Belongs to the ThiG family. Homotetramer. Forms heterodimers with either ThiH or ThiS.

The protein resides in the cytoplasm. The catalysed reaction is [ThiS sulfur-carrier protein]-C-terminal-Gly-aminoethanethioate + 2-iminoacetate + 1-deoxy-D-xylulose 5-phosphate = [ThiS sulfur-carrier protein]-C-terminal Gly-Gly + 2-[(2R,5Z)-2-carboxy-4-methylthiazol-5(2H)-ylidene]ethyl phosphate + 2 H2O + H(+). It participates in cofactor biosynthesis; thiamine diphosphate biosynthesis. Its function is as follows. Catalyzes the rearrangement of 1-deoxy-D-xylulose 5-phosphate (DXP) to produce the thiazole phosphate moiety of thiamine. Sulfur is provided by the thiocarboxylate moiety of the carrier protein ThiS. In vitro, sulfur can be provided by H(2)S. This is Thiazole synthase from Serratia proteamaculans (strain 568).